We begin with the raw amino-acid sequence, 157 residues long: Protein snakeskin (157 aa).

At 2 to 6 (VSVQT) the chain is on the cytoplasmic side. A helical transmembrane segment spans residues 7 to 27 (IATIVVKTFKIVLNIIILVLY). Residues 28-53 (RTGYNGEFLGVGGTWNLNEEKNPDAE) are Extracellular-facing. The helical transmembrane segment at 54 to 74 (IVASGVIVGYLIYTLVQIVTF) threads the bilayer. At 75–87 (LFGTTEHKRALSE) the chain is on the cytoplasmic side. A helical membrane pass occupies residues 88-108 (IVMNFVGVFLWIAVGAVALHY). At 109 to 130 (WGGYQGEHQFQFVFAEKQVGLA) the chain is on the extracellular side. Residues 131 to 151 (VGALCVINGAIYLLDTALSVI) form a helical membrane-spanning segment. The Cytoplasmic portion of the chain corresponds to 152–157 (HFTKEM).

Expressed in midgut epithelium (at protein level).

It localises to the apicolateral cell membrane. The protein resides in the cell junction. It is found in the septate junction. In terms of biological role, required for assembly of smooth septate junctions (sSJs). May be important for barrier function of the midgut epithelium. In Bombyx mori (Silk moth), this protein is Protein snakeskin.